The sequence spans 360 residues: Glutamate 5-kinase (360 aa).

Lysine 7 is an ATP binding site. The substrate site is built by serine 47, aspartate 134, and asparagine 146. Residues 166-167 and 210-216 each bind ATP; these read TD and TGGISTK. The PUA domain occupies 275–356; the sequence is VGKITLDDGA…SSIIVVHRDV (82 aa).

The protein belongs to the glutamate 5-kinase family.

It is found in the cytoplasm. The catalysed reaction is L-glutamate + ATP = L-glutamyl 5-phosphate + ADP. It functions in the pathway amino-acid biosynthesis; L-proline biosynthesis; L-glutamate 5-semialdehyde from L-glutamate: step 1/2. In terms of biological role, catalyzes the transfer of a phosphate group to glutamate to form L-glutamate 5-phosphate. The polypeptide is Glutamate 5-kinase (Prochlorococcus marinus (strain MIT 9312)).